A 688-amino-acid polypeptide reads, in one-letter code: Ethylmalonyl-CoA mutase (688 aa).

Positions 530 to 659 constitute a B12-binding domain; that stretch reads TPRLVVGKPG…VGLAKVVERA (130 aa). An adenosylcob(III)alamin-binding site is contributed by His543. Positions 666-688 are disordered; the sequence is DRADTEAGVPGAPKRNESGAQVF.

This sequence belongs to the methylmalonyl-CoA mutase family. The cofactor is adenosylcob(III)alamin.

It carries out the reaction (2R)-ethylmalonyl-CoA = (2S)-methylsuccinyl-CoA. Functionally, radical enzyme that catalyzes the transformation of (2R)-ethylmalonyl-CoA to (2S)-methylsuccinyl-CoA. Is involved in the ethylmalonyl-CoA pathway for acetyl-CoA assimilation required for M.extorquens growth on one- and two-carbon compounds such as ethylamine, methanol or ethanol as sole carbon source. This enzyme acts as a regulatory metabolic control point in this pathway, that allows M.extorquens to efficiently restore metabolic balance when challenged with a sudden change in the growth substrate. This is Ethylmalonyl-CoA mutase from Methylorubrum extorquens (strain ATCC 14718 / DSM 1338 / JCM 2805 / NCIMB 9133 / AM1) (Methylobacterium extorquens).